A 455-amino-acid polypeptide reads, in one-letter code: uncharacterized protein (455 aa).

The span at 1–20 shows a compositional bias: low complexity; it reads MGCCLSKKPSPSLPSSVKPS. Disordered regions lie at residues 1–234 and 258–304; these read MGCC…IPAT and RIAA…QNTK. Basic and acidic residues-rich tracts occupy residues 35-46, 61-75, 129-143, 156-166, and 173-186; these read EEAKPKSEKLNQ, SHEE…DKDS, RSFD…RGGD, RGVERVHGSPR, and PSRE…RERG. The segment covering 213–224 has biased composition (polar residues); it reads SCGSSVNSSNNR. The span at 260–271 shows a compositional bias: low complexity; sequence AASPRSKSPARA.

This is an uncharacterized protein from Arabidopsis thaliana (Mouse-ear cress).